A 317-amino-acid polypeptide reads, in one-letter code: Ornithine carbamoyltransferase (317 aa).

Residues 57–60 (STRT), Gln84, Arg108, and 135–138 (HPCQ) each bind carbamoyl phosphate. L-ornithine is bound by residues Asn166, Asp230, and 234 to 235 (SM). Residues 270 to 271 (CL) and Arg298 contribute to the carbamoyl phosphate site.

Belongs to the aspartate/ornithine carbamoyltransferase superfamily. OTCase family. As to quaternary structure, homododecamer.

Its subcellular location is the cytoplasm. It carries out the reaction carbamoyl phosphate + L-ornithine = L-citrulline + phosphate + H(+). It functions in the pathway amino-acid biosynthesis; L-arginine biosynthesis; L-arginine from L-ornithine and carbamoyl phosphate: step 1/3. Functionally, reversibly catalyzes the transfer of the carbamoyl group from carbamoyl phosphate (CP) to the N(epsilon) atom of ornithine (ORN) to produce L-citrulline. This is Ornithine carbamoyltransferase from Pyrococcus abyssi (strain GE5 / Orsay).